The chain runs to 262 residues: 3-methyl-2-oxobutanoate hydroxymethyltransferase (262 aa).

Mg(2+) is bound by residues D31 and D70. Residues D31–S32, D70, and K99 each bind 3-methyl-2-oxobutanoate. Residue E101 coordinates Mg(2+). E168 functions as the Proton acceptor in the catalytic mechanism.

This sequence belongs to the PanB family. In terms of assembly, homodecamer; pentamer of dimers. The cofactor is Mg(2+).

Its subcellular location is the cytoplasm. The enzyme catalyses 3-methyl-2-oxobutanoate + (6R)-5,10-methylene-5,6,7,8-tetrahydrofolate + H2O = 2-dehydropantoate + (6S)-5,6,7,8-tetrahydrofolate. It functions in the pathway cofactor biosynthesis; coenzyme A biosynthesis. In terms of biological role, catalyzes the reversible reaction in which hydroxymethyl group from 5,10-methylenetetrahydrofolate is transferred onto alpha-ketoisovalerate to form ketopantoate. This Cenarchaeum symbiosum (strain A) protein is 3-methyl-2-oxobutanoate hydroxymethyltransferase.